The primary structure comprises 199 residues: MTTLTAQQIACVYAWLAQLFSRELDDEQLTQIASAQMAEWFSLLKSEPPLTAAVNGLENSIATLTVRDDARLELAADFCGLFLMTDKQAALPYASAYKQDEQEIKRLLVEAGMETSGNFNEPADHLAIYLELLSHLHFSLGEGTVPARRIDGLRQKTLTALRQWLPEFVARCHQYDRFGFYAALSQLLQVLVECDNQKG.

It belongs to the TorD/DmsD family. TorD subfamily.

It localises to the cytoplasm. Its function is as follows. Involved in the biogenesis of TorA. Acts on TorA before the insertion of the molybdenum cofactor and, as a result, probably favors a conformation of the apoenzyme that is competent for acquiring the cofactor. This Escherichia coli O81 (strain ED1a) protein is Chaperone protein TorD.